Here is a 66-residue protein sequence, read N- to C-terminus: Phylloseptin-Az2 (66 aa).

The first 22 residues, Met1–Cys22, serve as a signal peptide directing secretion. The propeptide occupies Glu23–Glu44. Residues Glu24–Lys45 form a disordered region. Residues Glu31–Lys41 are compositionally biased toward acidic residues. Phe65 is subject to Phenylalanine amide.

In terms of tissue distribution, expressed by the skin glands.

The protein localises to the secreted. Its function is as follows. Has antibacterial activity against the Gram-negative bacteria E.coli ATCC 11775 (MIC=7.2 uM), and the Gram-positive bacteria S.aureus ATCC 12600 (MIC=3.6 uM) and M.luteus ATCC 49732 (MIC=1.8 uM). Does not inhibit the growth of the fungus C.albicans. The sequence is that of Phylloseptin-Az2 from Pithecopus azureus (Orange-legged monkey tree frog).